The primary structure comprises 129 residues: Glycine cleavage system H protein (129 aa).

In terms of domain architecture, Lipoyl-binding spans 24–106; the sequence is TYTVGITEHA…YTDGWIFKIK (83 aa). Lys65 bears the N6-lipoyllysine mark.

It belongs to the GcvH family. In terms of assembly, the glycine cleavage system is composed of four proteins: P, T, L and H. The cofactor is (R)-lipoate.

Its function is as follows. The glycine cleavage system catalyzes the degradation of glycine. The H protein shuttles the methylamine group of glycine from the P protein to the T protein. This Klebsiella pneumoniae subsp. pneumoniae (strain ATCC 700721 / MGH 78578) protein is Glycine cleavage system H protein.